We begin with the raw amino-acid sequence, 313 residues long: Dimethyladenosine transferase (313 aa).

The S-adenosyl-L-methionine site is built by His37, Leu39, Gly64, Glu85, Asp113, and Asn128.

This sequence belongs to the class I-like SAM-binding methyltransferase superfamily. rRNA adenine N(6)-methyltransferase family. Part of the small subunit (SSU) processome, composed of more than 70 proteins and the RNA chaperone small nucleolar RNA (snoRNA) U3.

It localises to the nucleus. Its subcellular location is the nucleoplasm. The protein resides in the nucleolus. It carries out the reaction adenosine(1779)/adenosine(1780) in 18S rRNA + 4 S-adenosyl-L-methionine = N(6)-dimethyladenosine(1779)/N(6)-dimethyladenosine(1780) in 18S rRNA + 4 S-adenosyl-L-homocysteine + 4 H(+). Its function is as follows. Specifically dimethylates two adjacent adenosines in the loop of a conserved hairpin near the 3'-end of 18S rRNA in the 40S particle. Involved in the pre-rRNA processing steps leading to small-subunit rRNA production independently of its RNA-modifying catalytic activity. Part of the small subunit (SSU) processome, first precursor of the small eukaryotic ribosomal subunit. During the assembly of the SSU processome in the nucleolus, many ribosome biogenesis factors, an RNA chaperone and ribosomal proteins associate with the nascent pre-rRNA and work in concert to generate RNA folding, modifications, rearrangements and cleavage as well as targeted degradation of pre-ribosomal RNA by the RNA exosome. This Mus musculus (Mouse) protein is Dimethyladenosine transferase (Dimt1).